The following is a 251-amino-acid chain: Imidazole glycerol phosphate synthase subunit HisF (251 aa).

Catalysis depends on residues aspartate 11 and aspartate 130.

Belongs to the HisA/HisF family. As to quaternary structure, heterodimer of HisH and HisF.

The protein resides in the cytoplasm. The enzyme catalyses 5-[(5-phospho-1-deoxy-D-ribulos-1-ylimino)methylamino]-1-(5-phospho-beta-D-ribosyl)imidazole-4-carboxamide + L-glutamine = D-erythro-1-(imidazol-4-yl)glycerol 3-phosphate + 5-amino-1-(5-phospho-beta-D-ribosyl)imidazole-4-carboxamide + L-glutamate + H(+). The protein operates within amino-acid biosynthesis; L-histidine biosynthesis; L-histidine from 5-phospho-alpha-D-ribose 1-diphosphate: step 5/9. IGPS catalyzes the conversion of PRFAR and glutamine to IGP, AICAR and glutamate. The HisF subunit catalyzes the cyclization activity that produces IGP and AICAR from PRFAR using the ammonia provided by the HisH subunit. The polypeptide is Imidazole glycerol phosphate synthase subunit HisF (Chlorobaculum parvum (strain DSM 263 / NCIMB 8327) (Chlorobium vibrioforme subsp. thiosulfatophilum)).